The primary structure comprises 398 residues: MGANTSSKAPVFDENEDVNFDHFEILRAIGKGSFGKVCIVRKNDTKKMYAMKYMNKQKCVERNEVRNVFKELQIMQGLEHPFLVNLWYSFQDEEDMFMVVDLLLGGDLRYHLQQNVHFQEDTVKLFICELAMALDYLQSQRIIHRDMKPDNILLDEHGHVHITDFNIAAMLPKETRITTVAGTKPYMAPEMFTSRKETGYSFAVDWWSLGVTAYELLRGRRPYHIRSSTSSKEIVNMFETAIVTYPSAWSQEMVSLLKKLLEPNPDQRFSHLTDIQNFPYMSDMNWDAVLQKRLIPGFIPTKGRLNCDPTFELEEMILESKPLHKKKKRLAKREKEMKKSDSSQTCLLQEHLDAVQKEFIIFNREKVKSDFNQRQANLALEQTKNNTEEEEDGQNNNL.

G2 carries N-myristoyl glycine lipidation. Residues 23 to 281 (FEILRAIGKG…LTDIQNFPYM (259 aa)) form the Protein kinase domain. ATP is bound by residues 29–37 (IGKGSFGKV) and K52. D146 acts as the Proton acceptor in catalysis. Residues 379–398 (ALEQTKNNTEEEEDGQNNNL) are disordered. Acidic residues predominate over residues 388-398 (EEEEDGQNNNL).

The protein belongs to the protein kinase superfamily. Ser/Thr protein kinase family. It depends on Mg(2+) as a cofactor.

Its subcellular location is the cell membrane. The enzyme catalyses L-seryl-[protein] + ATP = O-phospho-L-seryl-[protein] + ADP + H(+). It catalyses the reaction L-threonyl-[protein] + ATP = O-phospho-L-threonyl-[protein] + ADP + H(+). This chain is Serine/threonine-protein kinase 32A, found in Mus musculus (Mouse).